Consider the following 71-residue polypeptide: Small ribosomal subunit protein bS21 (71 aa).

Belongs to the bacterial ribosomal protein bS21 family.

The chain is Small ribosomal subunit protein bS21 from Blochmanniella floridana.